A 154-amino-acid polypeptide reads, in one-letter code: Small ribosomal subunit protein bS6 (154 aa).

Residues 97–154 (DSEPSAMMQKRDRDDRKDRERGRRRDDEGFGGGGGFGGDRGDRGDRGDRGERSFGGEG) form a disordered region. Composition is skewed to basic and acidic residues over residues 105 to 124 (QKRD…RDDE) and 135 to 154 (DRGD…GGEG).

This sequence belongs to the bacterial ribosomal protein bS6 family.

Binds together with bS18 to 16S ribosomal RNA. This Methylobacterium radiotolerans (strain ATCC 27329 / DSM 1819 / JCM 2831 / NBRC 15690 / NCIMB 10815 / 0-1) protein is Small ribosomal subunit protein bS6.